A 128-amino-acid chain; its full sequence is 3-aminoacrylate deaminase RutC (128 aa).

It belongs to the RutC family. In terms of assembly, homotrimer.

The enzyme catalyses (Z)-3-aminoacrylate + H2O + H(+) = 3-oxopropanoate + NH4(+). In terms of biological role, involved in pyrimidine catabolism. Catalyzes the deamination of 3-aminoacrylate to malonic semialdehyde, a reaction that can also occur spontaneously. RutC may facilitate the reaction and modulate the metabolic fitness, rather than catalyzing essential functions. This chain is 3-aminoacrylate deaminase RutC, found in Escherichia coli O111:H- (strain 11128 / EHEC).